The sequence spans 544 residues: Rubrofusarin-specific efflux pump aurT (544 aa).

Positions 1–12 are enriched in basic and acidic residues; it reads MTDNTDMEKLDR. Positions 1-42 are disordered; the sequence is MTDNTDMEKLDRATTPTPIPNEAPPTSEPSESKPEEAEDESK. The segment covering 17–27 has biased composition (pro residues); it reads TPIPNEAPPTS. Basic and acidic residues predominate over residues 30–42; that stretch reads SESKPEEAEDESK. 8 consecutive transmembrane segments (helical) span residues 45 to 65, 89 to 111, 116 to 136, 146 to 166, 177 to 197, 205 to 225, 246 to 266, and 276 to 296; these read HGLK…LVAL, WYAS…IFTF, TVYL…GVAP, AIAG…ITTV, GMMG…GGAF, WCFY…ILLF, WGNL…QWGG, and IVAL…IQIW. The N-linked (GlcNAc...) asparagine glycan is linked to Asn-300. 6 helical membrane passes run 318 to 338, 357 to 377, 380 to 400, 407 to 427, 444 to 464, and 514 to 534; these read IFAF…PIWF, VLSL…VGWF, VFFS…TFVV, WIGY…LASL, LMFF…QAVF, and YFYV…GIEW.

It belongs to the major facilitator superfamily. TCR/Tet family.

The protein resides in the cell membrane. Its pathway is pigment biosynthesis. Its function is as follows. Rubrofusarin-specific efflux pump; part of the gene cluster that mediates the biosynthesis of aurofusarin, a red mycelium pigment which is acting as a mycotoxin. The first step is performed by the polyketide synthase which condenses one acetyl-CoA and 6 malonyl-CoA units to form the first intermediate, the cyclic heptaketide and yellow pigment YWA1. The C2 hydroxyl group in the pyrone ring of YWA1 is probably formed during ring closure by an aldol-type cyclization reaction. The dehydratase aurZ then acts as the first tailoring enzyme in the aurofusarin biosynthetic pathway by converting YWA1 to nor-rubrofusarin. Nor-rubrofusarin is then methylated to rubrofusarin by the O-methyltransferase aurJ. Rubrofusarin is then transported across the plasma membrane by the rubrofusarin-specific pump aurT for further enzymatic processing by the extracellular complex composed of GIP1, aurF, aurO and aurS to yield aurofusarin. This chain is Rubrofusarin-specific efflux pump aurT, found in Gibberella zeae (strain ATCC MYA-4620 / CBS 123657 / FGSC 9075 / NRRL 31084 / PH-1) (Wheat head blight fungus).